The primary structure comprises 205 residues: Homeobox protein goosecoid-2 (205 aa).

Disordered regions lie at residues 33–58 (SLPA…EPGA) and 185–205 (KRAS…KGSC). A DNA-binding region (homeobox) is located at residues 126–185 (TRRHRTIFSEEQLQALEALFVQNQYPDVSTRERLAGRIRLREERVEVWFKNRRAKWRHQK).

Belongs to the paired homeobox family. Bicoid subfamily. Detected in adult testis and pituitary, and in 9-10 week fetal tissue (thorax). Probably expressed in other tissues at low levels.

The protein localises to the nucleus. Its function is as follows. May have a role in development. May regulate its own transcription. May bind the bicoid consensus sequence TAATCC. The sequence is that of Homeobox protein goosecoid-2 (GSC2) from Homo sapiens (Human).